The following is a 370-amino-acid chain: Galanin receptor type 3 (370 aa).

The Extracellular segment spans residues 1-20; sequence MADIQNISLDSPGSVGAVAV. Asn-6 carries an N-linked (GlcNAc...) asparagine glycan. A helical transmembrane segment spans residues 21–41; it reads PVVFALIFLLGMVGNGLVLAV. Over 42 to 57 the chain is Cytoplasmic; that stretch reads LLQPGPSAWQEPGSTT. The helical transmembrane segment at 58–78 threads the bilayer; it reads DLFILNLAVADLCFILCCVPF. Over 79–96 the chain is Extracellular; that stretch reads QAAIYTLDAWLFGAFVCK. Cys-95 and Cys-172 form a disulfide bridge. The chain crosses the membrane as a helical span at residues 97–118; it reads TVHLLIYLTMYASSFTLAAVSV. Residues 119 to 138 lie on the Cytoplasmic side of the membrane; the sequence is DRYLAVRHPLRSRALRTPRN. Residues 139–159 form a helical membrane-spanning segment; sequence ARAAVGLVWLLAALFSAPYLS. At 160-184 the chain is on the extracellular side; that stretch reads YYGTVRYGALELCVPAWEDARRRAL. A helical transmembrane segment spans residues 185 to 205; the sequence is DVATFAAGYLLPVTVVSLAYG. The Cytoplasmic portion of the chain corresponds to 206–236; the sequence is RTLCFLWAAVGPAGAAAAEARRRATGRAGRA. Residues 237 to 257 form a helical membrane-spanning segment; it reads MLTVAALYALCWGPHHALILC. Over 258-259 the chain is Extracellular; that stretch reads FW. The helical transmembrane segment at 260-280 threads the bilayer; the sequence is YGRFAFSPATYACRLASHCLA. Residues 281 to 370 lie on the Cytoplasmic side of the membrane; sequence YANSCLNPLV…RLTLSARGPQ (90 aa). Residue Cys-308 is the site of S-palmitoyl cysteine attachment. The segment at 328-370 is disordered; that stretch reads QPASSGPAGYPGDARPRGWSMEPRGDALRGGETRLTLSARGPQ. Residues 350–359 show a composition bias toward basic and acidic residues; the sequence is PRGDALRGGE.

This sequence belongs to the G-protein coupled receptor 1 family.

The protein resides in the cell membrane. Receptor for the hormone galanin and spexin-1. This is Galanin receptor type 3 (Galr3) from Mus musculus (Mouse).